Reading from the N-terminus, the 182-residue chain is Keratin, type II cytoskeletal 60 kDa, component III (182 aa).

Residues 1–63 enclose the IF rod domain; sequence ERGELALKDA…KLLEGEECRL (63 aa). A coil 2 region spans residues 1–63; that stretch reads ERGELALKDA…KLLEGEECRL (63 aa). The tract at residues 63-182 is tail; that stretch reads LSGEGVGPVN…TSSSRKSFKS (120 aa). A disordered region spans residues 157-182; the sequence is FGSGGGSSSSVKFVSTTSSSRKSFKS. The span at 164–182 shows a compositional bias: low complexity; it reads SSSVKFVSTTSSSRKSFKS.

Belongs to the intermediate filament family. As to quaternary structure, heterotetramer of two type I and two type II keratins.

In Bos taurus (Bovine), this protein is Keratin, type II cytoskeletal 60 kDa, component III.